Consider the following 462-residue polypeptide: Chromosomal replication initiator protein DnaA (462 aa).

Residues 1-83 are domain I, interacts with DnaA modulators; it reads MSLSLWQQCL…LRFEVGSKPA (83 aa). The segment at 83-125 is domain II; the sequence is AARAHNNPVTASVSAPVAPVTRSAPMRPSWDNSPAQPELSYRS. The tract at residues 104-125 is disordered; it reads RSAPMRPSWDNSPAQPELSYRS. The segment covering 112-125 has biased composition (polar residues); the sequence is WDNSPAQPELSYRS. Positions 126–342 are domain III, AAA+ region; the sequence is NVNPKHTFDN…GALNRVIANA (217 aa). Residues G170, G172, K173, and T174 each coordinate ATP. The interval 343 to 462 is domain IV, binds dsDNA; it reads NFTGRAITID…FSNLIRTLSS (120 aa).

The protein belongs to the DnaA family. As to quaternary structure, oligomerizes as a right-handed, spiral filament on DNA at oriC.

The protein localises to the cytoplasm. In terms of biological role, plays an essential role in the initiation and regulation of chromosomal replication. ATP-DnaA binds to the origin of replication (oriC) to initiate formation of the DNA replication initiation complex once per cell cycle. Binds the DnaA box (a 9 base pair repeat at the origin) and separates the double-stranded (ds)DNA. Forms a right-handed helical filament on oriC DNA; dsDNA binds to the exterior of the filament while single-stranded (ss)DNA is stabiized in the filament's interior. The ATP-DnaA-oriC complex binds and stabilizes one strand of the AT-rich DNA unwinding element (DUE), permitting loading of DNA polymerase. After initiation quickly degrades to an ADP-DnaA complex that is not apt for DNA replication. Binds acidic phospholipids. The protein is Chromosomal replication initiator protein DnaA of Yersinia pseudotuberculosis serotype O:1b (strain IP 31758).